We begin with the raw amino-acid sequence, 565 residues long: Transmembrane 7 superfamily member 3 (565 aa).

An N-terminal signal peptide occupies residues 1–21; it reads MWRLRLLVLAVLAAGSAEAQA. Asparagine 22, asparagine 56, asparagine 70, and asparagine 259 each carry an N-linked (GlcNAc...) asparagine glycan. 7 helical membrane-spanning segments follow: residues 287–307, 315–335, 341–361, 364–384, 402–422, 427–447, and 478–498; these read VSTK…CFFG, LFFV…TRLT, VRLA…VASW, FGIL…LVSS, VFWV…MGCL, ILAC…SYMF, and NDYI…TLQI.

It is found in the cell membrane. Involved in the inhibition of cytokine-induced death of pancreatic beta cells. Involved in the promotion of insulin secretion from pancreatic beta cells. Is a downstream transcriptional target of p53/TP53, and acts as a pro-survival homeostatic factor that attenuates the development of cellular stress. Maintains protein homeostasis and promotes cell survival through attenuation of endoplasmic reticulum (ER) stress and the subsequent induction of unfolded protein response (UPR). The chain is Transmembrane 7 superfamily member 3 (Tm7sf3) from Mus musculus (Mouse).